Here is a 283-residue protein sequence, read N- to C-terminus: Gap junction beta-1 protein (283 aa).

Residues M1–R22 are Cytoplasmic-facing. A helical transmembrane segment spans residues V23–G45. Residues D46–R75 are Extracellular-facing. The helical transmembrane segment at L76–V95 threads the bilayer. Residues A96–T130 are Cytoplasmic-facing. Residues L131–F153 form a helical membrane-spanning segment. At Y154–T191 the chain is on the extracellular side. A helical transmembrane segment spans residues V192 to I214. Residues R215–C283 lie on the Cytoplasmic side of the membrane. Phosphoserine occurs at positions 233, 258, 266, and 277.

This sequence belongs to the connexin family. Beta-type (group I) subfamily. As to quaternary structure, a connexon is composed of a hexamer of connexins. Interacts with CNST.

Its subcellular location is the cell membrane. It localises to the cell junction. The protein resides in the gap junction. Functionally, one gap junction consists of a cluster of closely packed pairs of transmembrane channels, the connexons, through which materials of low MW diffuse from one cell to a neighboring cell. The polypeptide is Gap junction beta-1 protein (Gjb1) (Mus musculus (Mouse)).